A 228-amino-acid chain; its full sequence is Response regulator MprA (228 aa).

The Response regulatory domain occupies 2–116 (RILVVDDDRA…ELLARMRALL (115 aa)). Aspartate 46 is modified (4-aspartylphosphate). Residues 127–225 (SVAMTFSDLT…VRGVGYVLRE (99 aa)) constitute a DNA-binding region (ompR/PhoB-type).

Phosphorylated and dephosphorylated by MprB.

Its subcellular location is the cytoplasm. In terms of biological role, member of the two-component regulatory system MprB/MprA which contributes to maintaining a balance among several systems involved in stress resistance and is required for establishment and maintenance of persistent infection in the host. Functions as a transcriptional regulator that recognizes a 19-bp nucleotide motif comprizing two loosely conserved 8-bp direct DNA-binding motif repeats separated by a 3-bp spacer region. This chain is Response regulator MprA (mprA), found in Mycobacterium avium (strain 104).